A 297-amino-acid polypeptide reads, in one-letter code: Phosphoribosylaminoimidazole-succinocarboxamide synthase (297 aa).

It belongs to the SAICAR synthetase family.

The catalysed reaction is 5-amino-1-(5-phospho-D-ribosyl)imidazole-4-carboxylate + L-aspartate + ATP = (2S)-2-[5-amino-1-(5-phospho-beta-D-ribosyl)imidazole-4-carboxamido]succinate + ADP + phosphate + 2 H(+). It participates in purine metabolism; IMP biosynthesis via de novo pathway; 5-amino-1-(5-phospho-D-ribosyl)imidazole-4-carboxamide from 5-amino-1-(5-phospho-D-ribosyl)imidazole-4-carboxylate: step 1/2. The polypeptide is Phosphoribosylaminoimidazole-succinocarboxamide synthase (purC) (Mycobacterium leprae (strain TN)).